Reading from the N-terminus, the 166-residue chain is Cyclin-dependent kinase 4 inhibitor D (166 aa).

Position 1 is an N-acetylmethionine (Met1). 4 ANK repeats span residues 41 to 69 (FGKTALQVMMFGSPTIALELLKQGASPNV), 73 to 102 (SGTTPAHDAARTGFLDTLKVLVEHGADVNA), 106 to 135 (TGALPIHLAVREGHTSVVSFLATESDLHHR), and 138 to 166 (TGLTPLELARGRGAQELMDILQRHTVAPL).

It belongs to the CDKN2 cyclin-dependent kinase inhibitor family. As to quaternary structure, interacts with CDK6.

The protein localises to the nucleus. The protein resides in the cytoplasm. Functionally, interacts strongly with CDK4 and CDK6 and inhibits them. This chain is Cyclin-dependent kinase 4 inhibitor D (CDKN2D), found in Bos taurus (Bovine).